A 758-amino-acid chain; its full sequence is UPF0313 protein CV_1738 (758 aa).

The 266-residue stretch at 377–642 (AWEMIKYSVN…VDVVRDGYRR (266 aa)) folds into the Radical SAM core domain. The [4Fe-4S] cluster site is built by Cys391, Cys395, and Cys398. The disordered stretch occupies residues 698–758 (GAPMNRGKSP…KPGGKTSRSR (61 aa)). A compositionally biased stretch (gly residues) spans 727–737 (RGQGGQGGRPG).

The protein belongs to the UPF0313 family. [4Fe-4S] cluster serves as cofactor.

The sequence is that of UPF0313 protein CV_1738 from Chromobacterium violaceum (strain ATCC 12472 / DSM 30191 / JCM 1249 / CCUG 213 / NBRC 12614 / NCIMB 9131 / NCTC 9757 / MK).